The sequence spans 463 residues: L-seryl-tRNA(Sec) selenium transferase (463 aa).

An N6-(pyridoxal phosphate)lysine modification is found at Lys295.

This sequence belongs to the SelA family. In terms of assembly, homodecamer; pentamer of dimers. Binds only one seryl-tRNA(Sec) per dimer. It depends on pyridoxal 5'-phosphate as a cofactor.

Its subcellular location is the cytoplasm. It carries out the reaction L-seryl-tRNA(Sec) + selenophosphate + H(+) = L-selenocysteinyl-tRNA(Sec) + phosphate. It functions in the pathway aminoacyl-tRNA biosynthesis; selenocysteinyl-tRNA(Sec) biosynthesis; selenocysteinyl-tRNA(Sec) from L-seryl-tRNA(Sec) (bacterial route): step 1/1. Its function is as follows. Converts seryl-tRNA(Sec) to selenocysteinyl-tRNA(Sec) required for selenoprotein biosynthesis. This chain is L-seryl-tRNA(Sec) selenium transferase, found in Escherichia coli O81 (strain ED1a).